A 192-amino-acid polypeptide reads, in one-letter code: Fe/S biogenesis protein NfuA (192 aa).

The [4Fe-4S] cluster site is built by C149 and C152.

The protein belongs to the NfuA family. As to quaternary structure, homodimer. [4Fe-4S] cluster serves as cofactor.

Its function is as follows. Involved in iron-sulfur cluster biogenesis. Binds a 4Fe-4S cluster, can transfer this cluster to apoproteins, and thereby intervenes in the maturation of Fe/S proteins. Could also act as a scaffold/chaperone for damaged Fe/S proteins. This is Fe/S biogenesis protein NfuA from Shewanella baltica (strain OS223).